The chain runs to 376 residues: Phytanoyl-CoA hydroxylase interacting protein-like (376 aa).

A phosphoserine mark is found at S12 and S15. N-linked (GlcNAc...) asparagine glycosylation occurs at N23. S25 carries the phosphoserine modification. An N-linked (GlcNAc...) asparagine glycan is attached at N37. The 110-residue stretch at 52–161 folds into the Fibronectin type-III domain; it reads VPRNIKISNI…EIIEFCTADY (110 aa).

It belongs to the PHYHIP family.

In terms of biological role, may play a role in the development of the central system. The sequence is that of Phytanoyl-CoA hydroxylase interacting protein-like (PHYHIPL) from Bos taurus (Bovine).